Consider the following 847-residue polypeptide: Rho GTPase-activating protein 12 (847 aa).

An SH3 domain is found at 12-74; sequence PGQAYIEVEY…PAQYVKEVTR (63 aa). Residues 110-241 form a disordered region; that stretch reads LPELSSFGKP…PPNQGRPDSP (132 aa). Polar residues-rich tracts occupy residues 117–174 and 191–200; these read GKPS…QNRT and TSFSQEQSCD. Position 165 is a phosphoserine (serine 165). Phosphoserine is present on residues serine 201, serine 213, and serine 215. Polar residues predominate over residues 224-234; it reads TEQIRATTPPN. Phosphothreonine occurs at positions 230 and 231. The residue at position 240 (serine 240) is a Phosphoserine. Tyrosine 243 is modified (phosphotyrosine). 2 consecutive WW domains span residues 265 to 298 and 358 to 391; these read IQIN…PPRW and DYTN…LPKY. The interval 293–317 is disordered; it reads WKPPRWTRDASISKGDFQSPGDQEL. 2 disordered regions span residues 428-466 and 591-625; these read DTND…DQEK and PDSP…SEQK. The span at 445–461 shows a compositional bias: polar residues; sequence NESSPSSPKHQDTASSP. The PH domain occupies 463 to 575; that stretch reads DQEKYGLLNV…WFKVLSSTIN (113 aa). A Phosphoserine modification is found at serine 593. Basic and acidic residues predominate over residues 595 to 610; the sequence is GIEKHDKEKEQKDPKK. The 189-residue stretch at 657–845 folds into the Rho-GAP domain; it reads SNLANLCQRE…LILLELSSIF (189 aa).

In terms of biological role, GTPase activator for the Rho-type GTPases by converting them to an inactive GDP-bound state. The sequence is that of Rho GTPase-activating protein 12 (ARHGAP12) from Macaca fascicularis (Crab-eating macaque).